The primary structure comprises 137 residues: Acetyltransferase Atu2258 (137 aa).

An N-acetyltransferase domain is found at 1 to 137 (MNFVLSDVAD…QSITWLEKRF (137 aa)). Residues 66–68 (LFV), Gly74, and 108–110 (RTY) each bind CoA.

Its function is as follows. Catalyzes the transfer of an acetyl group from acetyl coenzyme A (AcCoA) to an acceptor substrate and releases both CoA and the acetylated product. It prefers glucosamine 6-phosphate or dopamine. It can also use the thialysine, N(8)-acetylspermidine, chloramphenicol, puromycin, polymyxin B, and 4-aminobutyrate ethyl ester. This is Acetyltransferase Atu2258 from Agrobacterium fabrum (strain C58 / ATCC 33970) (Agrobacterium tumefaciens (strain C58)).